We begin with the raw amino-acid sequence, 654 residues long: Glycogen debranching enzyme (654 aa).

Catalysis depends on D336, which acts as the Nucleophile. The active-site Proton donor is E371. Residues 459 to 484 (EANGEENRDGTNSNYSDNHGKEGLGG) form a disordered region.

It belongs to the glycosyl hydrolase 13 family.

It carries out the reaction Hydrolysis of (1-&gt;6)-alpha-D-glucosidic linkages to branches with degrees of polymerization of three or four glucose residues in limit dextrin.. Its pathway is glycan degradation; glycogen degradation. Removes maltotriose and maltotetraose chains that are attached by 1,6-alpha-linkage to the limit dextrin main chain, generating a debranched limit dextrin. The chain is Glycogen debranching enzyme from Salmonella typhi.